A 250-amino-acid polypeptide reads, in one-letter code: Phosphoribosylaminoimidazole-succinocarboxamide synthase (250 aa).

Belongs to the SAICAR synthetase family.

It catalyses the reaction 5-amino-1-(5-phospho-D-ribosyl)imidazole-4-carboxylate + L-aspartate + ATP = (2S)-2-[5-amino-1-(5-phospho-beta-D-ribosyl)imidazole-4-carboxamido]succinate + ADP + phosphate + 2 H(+). Its pathway is purine metabolism; IMP biosynthesis via de novo pathway; 5-amino-1-(5-phospho-D-ribosyl)imidazole-4-carboxamide from 5-amino-1-(5-phospho-D-ribosyl)imidazole-4-carboxylate: step 1/2. The polypeptide is Phosphoribosylaminoimidazole-succinocarboxamide synthase (Parasynechococcus marenigrum (strain WH8102)).